The sequence spans 299 residues: N-acetylaspartate synthetase (299 aa).

Over residues 44–57 (AAPGPAAAPPPAAG) the composition is skewed to pro residues. Residues 44–70 (AAPGPAAAPPPAAGPQPHGGTGGAGPP) are disordered. The segment covering 60–70 (PHGGTGGAGPP) has biased composition (gly residues). A helical transmembrane segment spans residues 118–138 (YALLAALCFAVTRSLLLTCLV). The N-acetyltransferase domain maps to 143 to 280 (LALRYYYSRK…VLPGMTLSLA (138 aa)).

The protein belongs to the NAT8 family. In terms of tissue distribution, expressed in brain, including in mesencephalic dopaminergic neurons of the substantia nigra and ventral tegmental area and oligodendrocytes. Expressed in cortical pyramidal neurons and granule cells of the hippocampus (at protein level).

The protein localises to the cytoplasm. Its subcellular location is the microsome membrane. It is found in the mitochondrion membrane. The protein resides in the endoplasmic reticulum membrane. The catalysed reaction is L-aspartate + acetyl-CoA = N-acetyl-L-aspartate + CoA + H(+). Its activity is regulated as follows. Aminooxyacetic acid (AOAA) blocks its activity in both cytoplasm and mitochondria. Functionally, catalyzes the synthesis of N-acetylaspartate acid (NAA) from L-aspartate and acetyl-CoA. Promotes dopamine uptake by regulating TNF-alpha expression. Attenuates methamphetamine-induced inhibition of dopamine uptake. The sequence is that of N-acetylaspartate synthetase (Nat8l) from Rattus norvegicus (Rat).